We begin with the raw amino-acid sequence, 112 residues long: Protein FAM32A (112 aa).

Positions 23 to 56 (TKRKKKKKDKDKAKMLEAMGTSKKNEEEKRRCLD) are disordered. Basic and acidic residues predominate over residues 45–56 (KKNEEEKRRCLD).

Belongs to the FAM32 family.

It localises to the nucleus. In terms of biological role, may induce G2 arrest and apoptosis. May also increase cell sensitivity to apoptotic stimuli. This chain is Protein FAM32A (Fam32a), found in Rattus norvegicus (Rat).